The sequence spans 182 residues: Adenine phosphoribosyltransferase (182 aa).

This sequence belongs to the purine/pyrimidine phosphoribosyltransferase family. As to quaternary structure, homodimer.

The protein resides in the cytoplasm. It catalyses the reaction AMP + diphosphate = 5-phospho-alpha-D-ribose 1-diphosphate + adenine. It participates in purine metabolism; AMP biosynthesis via salvage pathway; AMP from adenine: step 1/1. In terms of biological role, catalyzes a salvage reaction resulting in the formation of AMP, that is energically less costly than de novo synthesis. The protein is Adenine phosphoribosyltransferase of Pseudomonas fluorescens (strain SBW25).